Reading from the N-terminus, the 434-residue chain is MSTAEQTQSDIMHRFWHDDLAAADPEIAEAVSNELKRQQDKIELIASENIASKAVLEATGSVFTNKYAEGYPGKRYYGGCDYADVVETLAIERAKELFGCNFANVQPNSGSQMNQAVFLALLQPGDTFMGLDLNSGGHLTHGSPVNISGKWFNPVSYGVRKDDELIDMDEVAETAREHKPKLIICGGTAYSRLWDFPRFREIADEVDATLLCDMSHISGLVAGGAHPSPFPHAHIVTSTTHKSLRGPRSGIILWNDEDLTKPLNMAVFPGLQGGPLMHVVAAKAVAFREALRPDFRTYAHAVVENARALAASLEENGLRIVSGGTDNHSMLVDLTAKDVTGKAAEAGLDRAWLTCNKNGIPYDTRSPFVTSGIRLGTPAGTTRGFGPAEFRKVGALIAEVVDGLAKNGPEGDAQVEESVRGRVSELCSQFPVYP.

Residues Leu-133 and 137–139 (GHL) contribute to the (6S)-5,6,7,8-tetrahydrofolate site. Lys-242 bears the N6-(pyridoxal phosphate)lysine mark. 366–368 (SPF) is a binding site for (6S)-5,6,7,8-tetrahydrofolate.

The protein belongs to the SHMT family. Homodimer. It depends on pyridoxal 5'-phosphate as a cofactor.

The protein resides in the cytoplasm. The catalysed reaction is (6R)-5,10-methylene-5,6,7,8-tetrahydrofolate + glycine + H2O = (6S)-5,6,7,8-tetrahydrofolate + L-serine. It participates in one-carbon metabolism; tetrahydrofolate interconversion. The protein operates within amino-acid biosynthesis; glycine biosynthesis; glycine from L-serine: step 1/1. Its function is as follows. Catalyzes the reversible interconversion of serine and glycine with tetrahydrofolate (THF) serving as the one-carbon carrier. This reaction serves as the major source of one-carbon groups required for the biosynthesis of purines, thymidylate, methionine, and other important biomolecules. Also exhibits THF-independent aldolase activity toward beta-hydroxyamino acids, producing glycine and aldehydes, via a retro-aldol mechanism. The chain is Serine hydroxymethyltransferase from Erythrobacter litoralis (strain HTCC2594).